The sequence spans 206 residues: Protein Ta0236 (206 aa).

The region spanning 16–205 (DIGTKAVRLA…EKDPEGVVEK (190 aa)) is the AMMECR1 domain.

The sequence is that of Protein Ta0236 from Thermoplasma acidophilum (strain ATCC 25905 / DSM 1728 / JCM 9062 / NBRC 15155 / AMRC-C165).